Consider the following 363-residue polypeptide: 2,5-diketocamphane 1,2-monooxygenase 2 (363 aa).

FMN-binding positions include Met-74 and 186 to 194 (TGLTKNSSS).

Belongs to the bacterial luciferase oxidoreductase family. In terms of assembly, homodimer. Likely forms a loose transient complex with a P.putida flavin reductase that provides the required FMNH(2) to the enzyme.

It catalyses the reaction (1R,4R)-bornane-2,5-dione + FMNH2 + O2 = (1R,4R)-5-oxo-1,2-campholide + FMN + H2O + H(+). Its pathway is terpene metabolism; (R)-camphor degradation. Its function is as follows. Involved in the degradation and assimilation of (+)-camphor, which allows P.putida strain NCIMB 10007 to grow on this enantiomer of camphor as the sole carbon source. Catalyzes the FMNH(2)-dependent lactonization of 2,5-diketocamphane via a Baeyer-Villiger oxidation to produce the unstable lactone 5-oxo-1,2-campholide with (R,R) configuration, that presumably undergoes spontaneous hydrolysis to form 2-oxo-Delta(3)-4,5,5-trimethylcyclopentenylacetate. Is also able to convert (+)-camphor and norcamphor to the corresponding lactone in vitro. Shows no conversion of (-)-camphor, (+)-fenchone, (-)-fenchone, and (+)-nopinone. Acts on other bicyclic ketones and, to a lesser extent, on some 2- and 4-substituted monocyclic ketones. This chain is 2,5-diketocamphane 1,2-monooxygenase 2, found in Pseudomonas putida (Arthrobacter siderocapsulatus).